The sequence spans 70 residues: Cold shock-like protein CspF (70 aa).

The CSD domain occupies 7 to 67 (GIVKTFDGKS…GLRGPSAANV (61 aa)).

The protein localises to the cytoplasm. This chain is Cold shock-like protein CspF (cspF), found in Escherichia coli (strain K12).